We begin with the raw amino-acid sequence, 178 residues long: Ribosome maturation factor RimM (178 aa).

Positions Ala-101–Phe-178 constitute a PRC barrel domain.

The protein belongs to the RimM family. In terms of assembly, binds ribosomal protein uS19.

The protein resides in the cytoplasm. Functionally, an accessory protein needed during the final step in the assembly of 30S ribosomal subunit, possibly for assembly of the head region. Essential for efficient processing of 16S rRNA. May be needed both before and after RbfA during the maturation of 16S rRNA. It has affinity for free ribosomal 30S subunits but not for 70S ribosomes. The polypeptide is Ribosome maturation factor RimM (Pseudomonas fluorescens (strain Pf0-1)).